The primary structure comprises 803 residues: Zinc finger protein 226 (803 aa).

A KRAB domain is found at 8 to 78 (VTFKDVAVAF…TTATRRQGNL (71 aa)). The C2H2-type 1; degenerate zinc-finger motif lies at 252 to 274 (YQCNECKKPFSDLSSFDLHQQLQ). A C2H2-type 2; degenerate zinc finger spans residues 280–302 (LTCVERGKGFCYSPVLPVHQKVH). 17 consecutive C2H2-type zinc fingers follow at residues 307-329 (LKCDECGKEFSQGAHLQTHQKVH), 335-357 (YKCKQCGKGFSRRSALNVHCKVH), 363-385 (YNCEECGRAFSQASHLQDHQRLH), 391-413 (FKCDACGKSFSRNSHLQSHQRVH), 419-441 (YKCEECGKGFICSSNLYIHQRVH), 447-469 (YKCEECGKGFSRPSSLQAHQGVH), 475-497 (YICTVCGKGFTLSSNLQAHQRVH), 503-525 (YKCNECGKSFRRNSHYQVHLVVH), 531-553 (YKCEICGKGFSQSSYLQIHQKAH), 559-581 (FKCEECGQGFNQSSRLQIHQLIH), 587-609 (YKCEECGKGFSRRADLKIHCRIH), 615-637 (YNCEECGKVFRQASNLLAHQRVH), 643-665 (FKCEECGKSFGRSAHLQAHQKVH), 671-693 (YKCDECGKGFKWSLNLDMHQRVH), 699-721 (YKCGECGKYFSQASSLQLHQSVH), 727-749 (YKCDVCGKVFSRSSQLQSHQRVH), and 755-777 (YKCEICGKSFSWRSNLTVHHRIH). Residues 781 to 803 (KSYKSNRGGKNIRESTQEKKSIK) are disordered. Residues 791 to 803 (NIRESTQEKKSIK) are compositionally biased toward basic and acidic residues.

It belongs to the krueppel C2H2-type zinc-finger protein family.

Its subcellular location is the nucleus. May be involved in transcriptional regulation. The protein is Zinc finger protein 226 (ZNF226) of Homo sapiens (Human).